Consider the following 378-residue polypeptide: MIMALSKTFGQKPVKFQLEEDGEYYMIGSEVGNYLRMFRGSLYKRYPSLWRRLATVEERKKIVASSHGKKYHGYTTLATSVTLLKASEVEEILDGNDEKYKAVSISTEPPTYLREQKAKRNSQWVPTLPNSSHHLDAVPCSTTINRNRMGRDKKRTFPLCFDDHDPAVIHENAAQSEVLVPIRLDMEIDGQKLRDAFTWNMNEKLMTPEMFAEILCDDLDLNPLAFVPAIASAIRQQIESYPTDSILEDQSDQRVIIKLNIHVGNISLVDQFEWDMSEKENSPEKFALKLCSELGLGGEFVTTIAYSIRGQLSWHQKTYAFSENPLPTVEIAIRNTGDADQWCPLLETLTDAEMEKKIRDQDRNTRRMRRLANTAPAW.

Residues 1 to 106 (MIMALSKTFG…DEKYKAVSIS (106 aa)) form a DNA-binding region.

Belongs to the SNF5 family. In terms of assembly, component of the multiprotein chromatin-remodeling complexes SWI/SNF. Component of neural progenitors-specific chromatin remodeling complex (npBAF complex) and the neuron-specific chromatin remodeling complex (nBAF complex). Component of the BAF (SWI/SNF) chromatin remodeling complex. Component of the SWI/SNF-B (PBAF) chromatin remodeling complex. Binds to double-stranded DNA.

It is found in the nucleus. Involved in chromatin-remodeling. Core component of the BAF (SWI/SNF) complex. This ATP-dependent chromatin-remodeling complex plays important roles in cell proliferation and differentiation, in cellular antiviral activities and inhibition of tumor formation. Belongs to the neural progenitors-specific chromatin remodeling complex (npBAF complex) and the neuron-specific chromatin remodeling complex (nBAF complex) and may play a role in neural development. In Xenopus tropicalis (Western clawed frog), this protein is SWI/SNF-related matrix-associated actin-dependent regulator of chromatin subfamily B member 1 (smarcb1).